Reading from the N-terminus, the 153-residue chain is uncharacterized protein (153 aa).

Residues 1–88 (MDKDRPGLPA…VPPPQLDHPG (88 aa)) form a disordered region.

This is an uncharacterized protein from Epstein-Barr virus (strain P3HR-1) (HHV-4).